The primary structure comprises 106 residues: Small ribosomal subunit protein mS33 (106 aa).

The residue at position 2 (S2) is an N-acetylserine. The disordered stretch occupies residues E81–K106. The segment covering R84–P94 has biased composition (basic residues). The span at R95 to K106 shows a compositional bias: basic and acidic residues.

It belongs to the mitochondrion-specific ribosomal protein mS33 family. In terms of assembly, component of the mitochondrial ribosome small subunit (28S) which comprises a 12S rRNA and about 30 distinct proteins.

It localises to the mitochondrion. The polypeptide is Small ribosomal subunit protein mS33 (Mrps33) (Mus musculus (Mouse)).